A 262-amino-acid chain; its full sequence is Glutamate racemase (262 aa).

Residues 7–8 and 39–40 each bind substrate; these read DS and YG. Catalysis depends on cysteine 70, which acts as the Proton donor/acceptor. A substrate-binding site is contributed by 71-72; that stretch reads NT. Cysteine 182 (proton donor/acceptor) is an active-site residue. Residue 183–184 coordinates substrate; that stretch reads TH.

This sequence belongs to the aspartate/glutamate racemases family.

It carries out the reaction L-glutamate = D-glutamate. It functions in the pathway cell wall biogenesis; peptidoglycan biosynthesis. Provides the (R)-glutamate required for cell wall biosynthesis. This Campylobacter concisus (strain 13826) protein is Glutamate racemase.